The following is a 629-amino-acid chain: MFYTENYDVIVIGGGHAGTEAALAPARMGLKTLLLTHNVDTLGQMSCNPAIGGIGKGHLVREIDAMGGLMATAADQAGIQFRTLNSSKGPAVRATRAQADRVLYRQAVRIALENQENLDIFQQEVTDIILDQDRVCGVVTKMGLKFHAKAVILTAGTFLSGKIHIGLENYTGGRAGDPASVMLADRLRELNLRVDRLKTGTPPRIDARTIDFSVLAKQHGDEKLPVFSFMGSVDQHPRQIPCFITHTNEQTHEVIRNNLDRSPMYAGIIEGIGPRYCPSIEDKVMRFSERNSHQIYLEPEGLTSNEIYPNGISTSLPFDVQMKIVNSMKGMEKARIIKPGYAIEYDYFDPRDLKPTLETKSIRGLFFAGQINGTTGYEEAAGQGLLAGINAGLFVQEKEAWFPRRDQAYIGVLVDDLCTLGTKEPYRVFTSRAEYRLLLREDNADSRLTPIAHQLGLIDEKRWARFNQKMENIELERQRLRQIWLHPRSEYLDEANKVLGSPLVREASGEDLLRRPEMNYQILTSLTPFQPAMDDQEAVEQVEIAIKYQGYIEHQQEEIARQKRHESTAIPAHFDYTVVSGLSNEVRAKLEQHRPVSIGQASRISGVTPAAISILLVSLKKQGMLKRGE.

FAD contacts are provided by residues 13–18, Val125, and Ser180; that span reads GGGHAG. 273–287 is a binding site for NAD(+); that stretch reads GPRYCPSIEDKVMRF. Gln370 is an FAD binding site.

It belongs to the MnmG family. In terms of assembly, homodimer. Heterotetramer of two MnmE and two MnmG subunits. It depends on FAD as a cofactor.

Its subcellular location is the cytoplasm. Its function is as follows. NAD-binding protein involved in the addition of a carboxymethylaminomethyl (cmnm) group at the wobble position (U34) of certain tRNAs, forming tRNA-cmnm(5)s(2)U34. The protein is tRNA uridine 5-carboxymethylaminomethyl modification enzyme MnmG of Pasteurella multocida (strain Pm70).